The sequence spans 149 residues: Inner membrane protein YidI (149 aa).

At 1 to 8 (MGIIAQNK) the chain is on the cytoplasmic side. The helical transmembrane segment at 9 to 31 (ISSLGMLFGAIALMMGIIHFSFG) threads the bilayer. Residues 32–77 (PFSAPPPTFESIVADKTAEIKRGLLAGIKGEKITTVEKKEDVDVDK) lie on the Periplasmic side of the membrane. Residues 78 to 97 (ILNQSGIALAIAALLCAFIG) traverse the membrane as a helical segment. The Cytoplasmic portion of the chain corresponds to 98-117 (GMRKENRWGIRGALVFGGGT). The helical transmembrane segment at 118-140 (LAFHTLLFGIGIVCSILLIFLIF) threads the bilayer. Over 141-149 (SFLTGGSLV) the chain is Periplasmic.

The protein resides in the cell inner membrane. This is Inner membrane protein YidI (yidI) from Escherichia coli (strain K12).